We begin with the raw amino-acid sequence, 269 residues long: Hydroxyethylthiazole kinase (269 aa).

M45 provides a ligand contact to substrate. ATP is bound by residues R121 and T167. G194 lines the substrate pocket.

It belongs to the Thz kinase family. Requires Mg(2+) as cofactor.

The catalysed reaction is 5-(2-hydroxyethyl)-4-methylthiazole + ATP = 4-methyl-5-(2-phosphooxyethyl)-thiazole + ADP + H(+). It participates in cofactor biosynthesis; thiamine diphosphate biosynthesis; 4-methyl-5-(2-phosphoethyl)-thiazole from 5-(2-hydroxyethyl)-4-methylthiazole: step 1/1. Functionally, catalyzes the phosphorylation of the hydroxyl group of 4-methyl-5-beta-hydroxyethylthiazole (THZ). This chain is Hydroxyethylthiazole kinase, found in Bacillus licheniformis (strain ATCC 14580 / DSM 13 / JCM 2505 / CCUG 7422 / NBRC 12200 / NCIMB 9375 / NCTC 10341 / NRRL NRS-1264 / Gibson 46).